The primary structure comprises 255 residues: 5'-nucleotidase SurE (255 aa).

Aspartate 8, aspartate 9, serine 40, and asparagine 92 together coordinate a divalent metal cation.

It belongs to the SurE nucleotidase family. Requires a divalent metal cation as cofactor.

It localises to the cytoplasm. The enzyme catalyses a ribonucleoside 5'-phosphate + H2O = a ribonucleoside + phosphate. Its function is as follows. Nucleotidase that shows phosphatase activity on nucleoside 5'-monophosphates. The protein is 5'-nucleotidase SurE of Brucella canis (strain ATCC 23365 / NCTC 10854 / RM-666).